The primary structure comprises 1053 residues: SPX and EXS domain-containing protein 2 (1053 aa).

Residues 1-339 form the SPX domain; the sequence is MKFRDYLKDN…PRIAKECRKY (339 aa). Low complexity predominate over residues 54–88; that stretch reads NNINKNNNNNNNNNNNNNNNNNNNNNINNNNNNNN. Residues 54–137 are disordered; the sequence is NNINKNNNNN…VGDEDGGDDD (84 aa). The span at 95-112 shows a compositional bias: polar residues; that stretch reads QTNSNNISIPNQMAPQES. Residues 113–122 show a composition bias toward acidic residues; the sequence is SGEDEDDENE. 10 helical membrane passes run 391–411, 427–447, 476–496, 510–530, 561–581, 595–615, 630–652, 666–686, 712–732, and 745–765; these read YIIG…IFKF, MAWL…LFAL, YLMY…VYVD, YLLL…ILPF, FFMS…QQIV, GVCF…PFYW, FFPH…LLWV, ILWF…DFTV, WVYY…LIVF, and PLFL…FIFF. Residues 596 to 798 form the EXS domain; the sequence is VCFKHKAVIF…SQDYKNYMEE (203 aa). Disordered stretches follow at residues 799–871 and 1023–1053; these read KKSR…VDDE and HPEL…NKSR. Residues 842-853 are compositionally biased toward acidic residues; it reads DDDDDDESIDSD. A compositionally biased stretch (polar residues) spans 1023–1040; that stretch reads HPELNSSNRNQVDPNSPM.

It belongs to the SYG1 (TC 2.A.94) family.

The protein localises to the membrane. This chain is SPX and EXS domain-containing protein 2, found in Dictyostelium discoideum (Social amoeba).